The following is a 449-amino-acid chain: MFKTLTQNLTKIFDKLVSSGILTEAQIDAAMRDIRVALLESDVALPVIKDFIAEVKQKALGQEVIKSVSPGQMIIKIIHEEMINLLASSESETKLNLNSKPPVNFLMVGLQGSGKTTASSKLALRLKNQNKKVLLVSLDTYRPAAQEQLAILANSVQINSLPIVQGEKPLDIVKRAIAEAKISAYGVVIYDTAGRTQIDKEMMEEALAIKKIVEPTETLLVIDSMTGQDAVVTANSFNEKLEISGLILSRIDGDSKGGAALSVKYITKKPIKFLSSGEKLTDLEEFDAERLASRILDMGDIISFVEKAASIVDREEAEKTAAKLKKGKFDLNDYLQQMRSIKKMGGFGSILSMLPGSGKIMDQIDQSKLNSKIIEHQEAIILSMTLKERENPDIINASRRKRIAAGAGTTVQKVNILLKQYKQISEMMKKASKMNPKNLLRNGIGKLFS.

Residues 109–116 (GLQGSGKT), 191–195 (DTAGR), and 249–252 (SRID) each bind GTP.

The protein belongs to the GTP-binding SRP family. SRP54 subfamily. As to quaternary structure, part of the signal recognition particle protein translocation system, which is composed of SRP and FtsY. SRP is a ribonucleoprotein composed of Ffh and a 4.5S RNA molecule.

Its subcellular location is the cytoplasm. It catalyses the reaction GTP + H2O = GDP + phosphate + H(+). Functionally, involved in targeting and insertion of nascent membrane proteins into the cytoplasmic membrane. Binds to the hydrophobic signal sequence of the ribosome-nascent chain (RNC) as it emerges from the ribosomes. The SRP-RNC complex is then targeted to the cytoplasmic membrane where it interacts with the SRP receptor FtsY. Interaction with FtsY leads to the transfer of the RNC complex to the Sec translocase for insertion into the membrane, the hydrolysis of GTP by both Ffh and FtsY, and the dissociation of the SRP-FtsY complex into the individual components. This chain is Signal recognition particle protein, found in Rickettsia felis (strain ATCC VR-1525 / URRWXCal2) (Rickettsia azadi).